We begin with the raw amino-acid sequence, 25 residues long: Bombinin-like peptide 4 (25 aa).

F25 bears the Phenylalanine amide mark.

This sequence belongs to the bombinin family. In terms of tissue distribution, expressed by the skin glands.

The protein resides in the secreted. Has antimicrobial activity, but no hemolytic activity. Preference on killing Gram-negative non-enteric bacteria. The protein is Bombinin-like peptide 4 of Bombina orientalis (Oriental fire-bellied toad).